A 149-amino-acid chain; its full sequence is UPF0756 membrane protein BBR47_32760 (149 aa).

Transmembrane regions (helical) follow at residues 3–23 (WISI…NATV), 48–68 (HGLQ…LASG), 85–105 (LLAV…TVLM), 106–126 (SQNP…VTFF), and 128–148 (GVAV…QFLP).

Belongs to the UPF0756 family.

It is found in the cell membrane. In Brevibacillus brevis (strain 47 / JCM 6285 / NBRC 100599), this protein is UPF0756 membrane protein BBR47_32760.